The sequence spans 455 residues: Na(+)/H(+) antiporter NhaA (455 aa).

The next 11 helical transmembrane spans lie at 31–51 (ASGILLIVSTAAALVWANSPW), 83–103 (GLMSIFFFLVGLEIKREVLIG), 113–133 (FPLIAAVGGTVVPAVIYLLCV), 141–161 (GWGIPMATDIAFALGVLILLG), 170–190 (VFVTALAIVDDIIAVLVIALF), 198–218 (VSLLVALGGVGIAFGFNLLGI), 231–251 (IWAAVLKSGVHATVAGVLLAF), 309–329 (GLQPWVSFLIMPLFAFSNAGV), 345–365 (IGVALGLFLGKPLGIWLFAWL), 383–403 (IFGASWICGIGFTMSLFIASL), and 414–434 (SKIGTLAASLVAGVCGSVVLW).

The protein belongs to the NhaA Na(+)/H(+) (TC 2.A.33) antiporter family.

It localises to the cell inner membrane. It carries out the reaction Na(+)(in) + 2 H(+)(out) = Na(+)(out) + 2 H(+)(in). Functionally, na(+)/H(+) antiporter that extrudes sodium in exchange for external protons. This is Na(+)/H(+) antiporter NhaA from Koribacter versatilis (strain Ellin345).